Reading from the N-terminus, the 247-residue chain is Auxin-responsive protein IAA13 (247 aa).

Residues 14–18 carry the EAR-like (transcriptional repression) motif; the sequence is LELGL. The span at 25–40 shows a compositional bias: gly residues; that stretch reads GTAAKIGKSGGGGAWG. Disordered regions lie at residues 25 to 44 and 49 to 119; these read GTAAKIGKSGGGGAWGERGR and KDFP…PKDV. The span at 62–75 shows a compositional bias: low complexity; the sequence is SASHAGSSPPRSSS. The segment covering 87-98 has biased composition (polar residues); it reads RMNSLVNNQATK. Positions 106-119 are enriched in basic and acidic residues; that stretch reads AGKKKVKDDEPKDV. The PB1 domain maps to 129–225; it reads VGFIKVNMDG…SVKRLRVMKT (97 aa).

The protein belongs to the Aux/IAA family. Homodimers and heterodimers. Interacts with TPL. As to expression, preferentially expressed in stems.

Its subcellular location is the nucleus. Its function is as follows. Aux/IAA proteins are short-lived transcriptional factors that function as repressors of early auxin response genes at low auxin concentrations. Repression is thought to result from the interaction with auxin response factors (ARFs), proteins that bind to the auxin-responsive promoter element (AuxRE). Formation of heterodimers with ARF proteins may alter their ability to modulate early auxin response genes expression. In Arabidopsis thaliana (Mouse-ear cress), this protein is Auxin-responsive protein IAA13 (IAA13).